The sequence spans 278 residues: Non-heme chloroperoxidase (278 aa).

The AB hydrolase-1 domain occupies 24 to 259; it reads PIVFHHGWPL…LKTYPGYSHG (236 aa). Residues S97, D229, and H258 contribute to the active site.

Belongs to the AB hydrolase superfamily. Bacterial non-heme haloperoxidase / perhydrolase family. In terms of assembly, homodimer.

In terms of biological role, chlorinates and brominates suitable organic compounds. Involved in the biosynthesis of the antibiotic pyrrolnitrin. This is Non-heme chloroperoxidase (cpo) from Burkholderia pyrrocinia (Pseudomonas pyrrocinia).